We begin with the raw amino-acid sequence, 162 residues long: UPF0303 protein Arad_3071 (162 aa).

The protein belongs to the UPF0303 family.

In Rhizobium rhizogenes (strain K84 / ATCC BAA-868) (Agrobacterium radiobacter), this protein is UPF0303 protein Arad_3071.